The primary structure comprises 260 residues: Histidine-binding periplasmic protein (260 aa).

Positions 1 to 22 (MKKLVLSLSLVLAFSSATAAFA) are cleaved as a signal peptide. A disulfide bond links C60 and C67. 6 residues coordinate L-histidine: S91, S92, S94, R99, T143, and D183.

The protein belongs to the bacterial solute-binding protein 3 family. The complex is composed of two ATP-binding proteins (HisP), two transmembrane proteins (HisM and HisQ) and a solute-binding protein (HisJ).

The protein localises to the periplasm. Functionally, part of the ABC transporter complex HisPMQJ involved in histidine transport. Binds histidine. Interacts with HisQMP and stimulates ATPase activity of HisP, which results in histidine translocation. The protein is Histidine-binding periplasmic protein (hisJ) of Escherichia coli O157:H7.